The primary structure comprises 365 residues: 2-aminoethylphosphonate--pyruvate transaminase (365 aa).

N6-(pyridoxal phosphate)lysine is present on K194.

The protein belongs to the class-V pyridoxal-phosphate-dependent aminotransferase family. PhnW subfamily. As to quaternary structure, homodimer. Requires pyridoxal 5'-phosphate as cofactor.

The catalysed reaction is (2-aminoethyl)phosphonate + pyruvate = phosphonoacetaldehyde + L-alanine. Involved in phosphonate degradation. In Bacillus cereus (strain 03BB102), this protein is 2-aminoethylphosphonate--pyruvate transaminase.